Reading from the N-terminus, the 460-residue chain is Argininosuccinate lyase (460 aa).

This sequence belongs to the lyase 1 family. Argininosuccinate lyase subfamily.

It is found in the cytoplasm. The enzyme catalyses 2-(N(omega)-L-arginino)succinate = fumarate + L-arginine. The protein operates within amino-acid biosynthesis; L-arginine biosynthesis; L-arginine from L-ornithine and carbamoyl phosphate: step 3/3. This chain is Argininosuccinate lyase, found in Desulforamulus reducens (strain ATCC BAA-1160 / DSM 100696 / MI-1) (Desulfotomaculum reducens).